The chain runs to 204 residues: Lipoprotein signal peptidase (204 aa).

The tract at residues 1–42 (MAEAERIIGTPDIPDAAGEGQERPDADPEREQQEQEQAPERT) is disordered. The span at 20 to 42 (GQERPDADPEREQQEQEQAPERT) shows a compositional bias: basic and acidic residues. Transmembrane regions (helical) follow at residues 50–70 (VLFA…MLVV), 100–120 (FGEA…VVIA), and 126–146 (LHSL…LGNL). Active-site residues include D163 and D177. A helical transmembrane segment spans residues 170–190 (FAVFNLADSAIVCGGILIVIL).

The protein belongs to the peptidase A8 family.

The protein resides in the cell membrane. The catalysed reaction is Release of signal peptides from bacterial membrane prolipoproteins. Hydrolyzes -Xaa-Yaa-Zaa-|-(S,diacylglyceryl)Cys-, in which Xaa is hydrophobic (preferably Leu), and Yaa (Ala or Ser) and Zaa (Gly or Ala) have small, neutral side chains.. The protein operates within protein modification; lipoprotein biosynthesis (signal peptide cleavage). Functionally, this protein specifically catalyzes the removal of signal peptides from prolipoproteins. In Streptomyces coelicolor (strain ATCC BAA-471 / A3(2) / M145), this protein is Lipoprotein signal peptidase.